The primary structure comprises 278 residues: Large ribosomal subunit protein uL2 (278 aa).

Residues 201–278 (HGNINDGKAG…IMRSRHQRKK (78 aa)) form a disordered region. Residues 210–221 (GRSRWRGKKPHV) show a composition bias toward basic residues.

It belongs to the universal ribosomal protein uL2 family. In terms of assembly, part of the 50S ribosomal subunit. Forms a bridge to the 30S subunit in the 70S ribosome.

One of the primary rRNA binding proteins. Required for association of the 30S and 50S subunits to form the 70S ribosome, for tRNA binding and peptide bond formation. It has been suggested to have peptidyltransferase activity; this is somewhat controversial. Makes several contacts with the 16S rRNA in the 70S ribosome. The polypeptide is Large ribosomal subunit protein uL2 (Rhizobium rhizogenes (strain K84 / ATCC BAA-868) (Agrobacterium radiobacter)).